Reading from the N-terminus, the 291-residue chain is Pyridoxal 5'-phosphate synthase subunit PdxS (291 aa).

D23 is a D-ribose 5-phosphate binding site. K80 (schiff-base intermediate with D-ribose 5-phosphate) is an active-site residue. G152 provides a ligand contact to D-ribose 5-phosphate. R164 provides a ligand contact to D-glyceraldehyde 3-phosphate. D-ribose 5-phosphate-binding positions include G213 and 234–235 (GS).

It belongs to the PdxS/SNZ family. In terms of assembly, in the presence of PdxT, forms a dodecamer of heterodimers.

It carries out the reaction aldehydo-D-ribose 5-phosphate + D-glyceraldehyde 3-phosphate + L-glutamine = pyridoxal 5'-phosphate + L-glutamate + phosphate + 3 H2O + H(+). The protein operates within cofactor biosynthesis; pyridoxal 5'-phosphate biosynthesis. In terms of biological role, catalyzes the formation of pyridoxal 5'-phosphate from ribose 5-phosphate (RBP), glyceraldehyde 3-phosphate (G3P) and ammonia. The ammonia is provided by the PdxT subunit. Can also use ribulose 5-phosphate and dihydroxyacetone phosphate as substrates, resulting from enzyme-catalyzed isomerization of RBP and G3P, respectively. In Bifidobacterium longum (strain NCC 2705), this protein is Pyridoxal 5'-phosphate synthase subunit PdxS.